Here is a 141-residue protein sequence, read N- to C-terminus: Hemoglobin subunit alpha-A (141 aa).

Residues 1–141 (VLSAADKTNV…VGAVLTAKYR (141 aa)) enclose the Globin domain. O2 is bound at residue H58. H87 is a heme b binding site.

Belongs to the globin family. Heterotetramer of two alpha chains and two beta chains. As to expression, red blood cells.

Functionally, involved in oxygen transport from the lung to the various peripheral tissues. The sequence is that of Hemoglobin subunit alpha-A (HBAA) from Cygnus olor (Mute swan).